A 376-amino-acid polypeptide reads, in one-letter code: uncharacterized protein (376 aa).

Phosphoserine is present on Ser-59. The region spanning 139–367 is the Rho-GAP domain; that stretch reads VAIEITVQRQ…CLIEHHNAIF (229 aa). Positions 307–338 are disordered; that stretch reads RPSRSPKKSNDFETATPWDLLSDEGEGPDASS.

This is an uncharacterized protein from Arabidopsis thaliana (Mouse-ear cress).